A 236-amino-acid chain; its full sequence is Ribose-5-phosphate isomerase A (236 aa).

Substrate-binding positions include 29–32, 86–89, and 99–102; these read SGST, DGAD, and KGGG. Catalysis depends on Glu-108, which acts as the Proton acceptor. Residue Lys-126 participates in substrate binding.

Belongs to the ribose 5-phosphate isomerase family. As to quaternary structure, homodimer.

The catalysed reaction is aldehydo-D-ribose 5-phosphate = D-ribulose 5-phosphate. Its pathway is carbohydrate degradation; pentose phosphate pathway; D-ribose 5-phosphate from D-ribulose 5-phosphate (non-oxidative stage): step 1/1. Functionally, catalyzes the reversible conversion of ribose-5-phosphate to ribulose 5-phosphate. This chain is Ribose-5-phosphate isomerase A, found in Prochlorococcus marinus (strain NATL2A).